Here is a 386-residue protein sequence, read N- to C-terminus: Aspergillopepsin-1 (386 aa).

The signal sequence occupies residues 1-20; the sequence is MVVFSKVAAAAFGLSAVASA. Positions 21–69 are cleaved as a propeptide — activation peptide; that stretch reads MPAAPPRQGFTINQLTRAIPKRTINLPAIYANALSKYGGNVPPHIQDAM. Residues 85 to 383 enclose the Peptidase A1 domain; that stretch reads YLTPVAVGGT…DSEGPQLGFA (299 aa). The active site involves Asp101. Asn130 carries an N-linked (GlcNAc...) asparagine glycan. Asp275 is an active-site residue. An intrachain disulfide couples Cys311 to Cys346.

The protein belongs to the peptidase A1 family. In terms of assembly, monomer.

It is found in the secreted. It carries out the reaction Hydrolysis of proteins with broad specificity. Generally favors hydrophobic residues in P1 and P1', but also accepts Lys in P1, which leads to activation of trypsinogen. Does not clot milk.. Secreted aspartic endopeptidase that allows assimilation of proteinaceous substrates. The scissile peptide bond is attacked by a nucleophilic water molecule activated by two aspartic residues in the active site. Shows a broad primary substrate specificity. Favors hydrophobic residues at the P1 and P1' positions, but also accepts a lysine residue in the P1 position, leading to the activation of trypsinogen and chymotrypsinogen A. In Emericella nidulans (strain FGSC A4 / ATCC 38163 / CBS 112.46 / NRRL 194 / M139) (Aspergillus nidulans), this protein is Aspergillopepsin-1.